The chain runs to 512 residues: Glycerol kinase 1 (512 aa).

ADP is bound at residue Thr18. 3 residues coordinate ATP: Thr18, Thr19, and Ser20. Thr18 lines the sn-glycerol 3-phosphate pocket. Arg22 serves as a coordination point for ADP. Sn-glycerol 3-phosphate contacts are provided by Arg88, Glu89, Tyr140, and Asp255. Residues Arg88, Glu89, Tyr140, Asp255, and Gln256 each coordinate glycerol. Residues Thr277 and Gly321 each contribute to the ADP site. ATP contacts are provided by Thr277, Gly321, Gln325, and Gly422. Residues Gly422 and Asn426 each coordinate ADP.

This sequence belongs to the FGGY kinase family.

The enzyme catalyses glycerol + ATP = sn-glycerol 3-phosphate + ADP + H(+). The protein operates within polyol metabolism; glycerol degradation via glycerol kinase pathway; sn-glycerol 3-phosphate from glycerol: step 1/1. Inhibited by fructose 1,6-bisphosphate (FBP). In terms of biological role, key enzyme in the regulation of glycerol uptake and metabolism. Catalyzes the phosphorylation of glycerol to yield sn-glycerol 3-phosphate. The polypeptide is Glycerol kinase 1 (Streptomyces avermitilis (strain ATCC 31267 / DSM 46492 / JCM 5070 / NBRC 14893 / NCIMB 12804 / NRRL 8165 / MA-4680)).